The sequence spans 118 residues: Large ribosomal subunit protein bL20 (118 aa).

Belongs to the bacterial ribosomal protein bL20 family.

Functionally, binds directly to 23S ribosomal RNA and is necessary for the in vitro assembly process of the 50S ribosomal subunit. It is not involved in the protein synthesizing functions of that subunit. In Caldicellulosiruptor saccharolyticus (strain ATCC 43494 / DSM 8903 / Tp8T 6331), this protein is Large ribosomal subunit protein bL20.